We begin with the raw amino-acid sequence, 353 residues long: Photosystem II D2 protein (353 aa).

Thr2 is modified (N-acetylthreonine). Residue Thr2 is modified to Phosphothreonine. Residues 41 to 61 form a helical membrane-spanning segment; sequence CAYFALGGWFTGTTFVTSWYT. Chlorophyll a is bound at residue His118. The helical transmembrane segment at 125–141 threads the bilayer; the sequence is GFMLRQFELARSVQLRP. Gln130 and Asn143 together coordinate pheophytin a. A helical transmembrane segment spans residues 153–166; the sequence is VFVSVFLIYPLGQS. His198 provides a ligand contact to chlorophyll a. The chain crosses the membrane as a helical span at residues 208-228; that stretch reads AALLCAIHGATVENTLFEDGD. Positions 215 and 262 each coordinate a plastoquinone. His215 contacts Fe cation. Residue His269 coordinates Fe cation. The chain crosses the membrane as a helical span at residues 279 to 295; sequence GLWMSAIGVVGLALNLR.

This sequence belongs to the reaction center PufL/M/PsbA/D family. In terms of assembly, PSII is composed of 1 copy each of membrane proteins PsbA, PsbB, PsbC, PsbD, PsbE, PsbF, PsbH, PsbI, PsbJ, PsbK, PsbL, PsbM, PsbT, PsbX, PsbY, PsbZ, Psb30/Ycf12, at least 3 peripheral proteins of the oxygen-evolving complex and a large number of cofactors. It forms dimeric complexes. The D1/D2 heterodimer binds P680, chlorophylls that are the primary electron donor of PSII, and subsequent electron acceptors. It shares a non-heme iron and each subunit binds pheophytin, quinone, additional chlorophylls, carotenoids and lipids. There is also a Cl(-1) ion associated with D1 and D2, which is required for oxygen evolution. The PSII complex binds additional chlorophylls, carotenoids and specific lipids. serves as cofactor.

It is found in the plastid. It localises to the chloroplast thylakoid membrane. The enzyme catalyses 2 a plastoquinone + 4 hnu + 2 H2O = 2 a plastoquinol + O2. In terms of biological role, photosystem II (PSII) is a light-driven water:plastoquinone oxidoreductase that uses light energy to abstract electrons from H(2)O, generating O(2) and a proton gradient subsequently used for ATP formation. It consists of a core antenna complex that captures photons, and an electron transfer chain that converts photonic excitation into a charge separation. The D1/D2 (PsbA/PsbD) reaction center heterodimer binds P680, the primary electron donor of PSII as well as several subsequent electron acceptors. D2 is needed for assembly of a stable PSII complex. The polypeptide is Photosystem II D2 protein (Drimys granadensis).